A 167-amino-acid chain; its full sequence is Peptide deformylase (167 aa).

Fe cation is bound by residues cysteine 90 and histidine 132. Residue glutamate 133 is part of the active site. Residue histidine 136 participates in Fe cation binding.

It belongs to the polypeptide deformylase family. Fe(2+) serves as cofactor.

It carries out the reaction N-terminal N-formyl-L-methionyl-[peptide] + H2O = N-terminal L-methionyl-[peptide] + formate. In terms of biological role, removes the formyl group from the N-terminal Met of newly synthesized proteins. Requires at least a dipeptide for an efficient rate of reaction. N-terminal L-methionine is a prerequisite for activity but the enzyme has broad specificity at other positions. This chain is Peptide deformylase, found in Dehalococcoides mccartyi (strain CBDB1).